Consider the following 382-residue polypeptide: D-galactonate dehydratase (382 aa).

Aspartate 183 lines the Mg(2+) pocket. The active-site Proton donor is histidine 185. 2 residues coordinate Mg(2+): glutamate 209 and glutamate 235. Histidine 285 (proton acceptor) is an active-site residue.

It belongs to the mandelate racemase/muconate lactonizing enzyme family. GalD subfamily. Mg(2+) is required as a cofactor.

The enzyme catalyses D-galactonate = 2-dehydro-3-deoxy-D-galactonate + H2O. The protein operates within carbohydrate acid metabolism; D-galactonate degradation; D-glyceraldehyde 3-phosphate and pyruvate from D-galactonate: step 1/3. Functionally, catalyzes the dehydration of D-galactonate to 2-keto-3-deoxy-D-galactonate. The sequence is that of D-galactonate dehydratase from Klebsiella pneumoniae subsp. pneumoniae (strain ATCC 700721 / MGH 78578).